The sequence spans 141 residues: Large ribosomal subunit protein uL23A (141 aa).

Phosphoserine is present on residues serine 68 and serine 70.

Belongs to the universal ribosomal protein uL23 family. In terms of assembly, component of the large ribosomal subunit (LSU). Mature yeast ribosomes consist of a small (40S) and a large (60S) subunit. The 40S small subunit contains 1 molecule of ribosomal RNA (18S rRNA) and at least 33 different proteins. The large 60S subunit contains 3 rRNA molecules (25S, 5.8S and 5S rRNA) and at least 46 different proteins. uL23 is associated with the polypeptide exit tunnel.

The protein resides in the cytoplasm. Functionally, this protein binds to a specific region on the 26S rRNA. In terms of biological role, component of the ribosome, a large ribonucleoprotein complex responsible for the synthesis of proteins in the cell. The small ribosomal subunit (SSU) binds messenger RNAs (mRNAs) and translates the encoded message by selecting cognate aminoacyl-transfer RNA (tRNA) molecules. The large subunit (LSU) contains the ribosomal catalytic site termed the peptidyl transferase center (PTC), which catalyzes the formation of peptide bonds, thereby polymerizing the amino acids delivered by tRNAs into a polypeptide chain. The nascent polypeptides leave the ribosome through a tunnel in the LSU and interact with protein factors that function in enzymatic processing, targeting, and the membrane insertion of nascent chains at the exit of the ribosomal tunnel. uL23 is a major component of the universal docking site for these factors at the polypeptide exit tunnel. This is Large ribosomal subunit protein uL23A (rpl2501) from Schizosaccharomyces pombe (strain 972 / ATCC 24843) (Fission yeast).